The chain runs to 155 residues: Keratin-associated protein 4-7 (155 aa).

Tandem repeats lie at residues 5 to 9, 24 to 28, 29 to 33, 34 to 38, 44 to 48, 49 to 53, 54 to 58, 59 to 63, 64 to 68, 69 to 73, 74 to 78, 79 to 83, 84 to 88, 89 to 93, 94 to 98, 99 to 103, 104 to 108, 109 to 113, 114 to 118, and 119 to 123. Residues 5–123 form a 20 X 5 AA repeats of C-C-[GIKRQVHEML]-[SPTRV]-[STVQRCP] region; the sequence is CCGSVCSDQG…CCRPCCCLRP (119 aa).

Belongs to the KRTAP type 4 family. In terms of assembly, interacts with hair keratins. In terms of tissue distribution, expressed in the hair follicles.

Functionally, in the hair cortex, hair keratin intermediate filaments are embedded in an interfilamentous matrix, consisting of hair keratin-associated proteins (KRTAP), which are essential for the formation of a rigid and resistant hair shaft through their extensive disulfide bond cross-linking with abundant cysteine residues of hair keratins. The matrix proteins include the high-sulfur and high-glycine-tyrosine keratins. The protein is Keratin-associated protein 4-7 (KRTAP4-7) of Homo sapiens (Human).